The sequence spans 192 residues: Probable thymidylate kinase (192 aa).

Position 7–14 (7–14) interacts with ATP; the sequence is GIDGAGKS.

This sequence belongs to the thymidylate kinase family.

The catalysed reaction is dTMP + ATP = dTDP + ADP. In Methanobrevibacter smithii (strain ATCC 35061 / DSM 861 / OCM 144 / PS), this protein is Probable thymidylate kinase.